The chain runs to 380 residues: Tubulin alpha chain (380 aa).

Residues glutamate 46, serine 115, glycine 119, threonine 120, threonine 154, asparagine 181, and asparagine 202 each coordinate GTP. Position 46 (glutamate 46) interacts with Mg(2+). The active site involves glutamate 228.

The protein belongs to the tubulin family. Dimer of alpha and beta chains. A typical microtubule is a hollow water-filled tube with an outer diameter of 25 nm and an inner diameter of 15 nM. Alpha-beta heterodimers associate head-to-tail to form protofilaments running lengthwise along the microtubule wall with the beta-tubulin subunit facing the microtubule plus end conferring a structural polarity. Microtubules usually have 13 protofilaments but different protofilament numbers can be found in some organisms and specialized cells. Requires Mg(2+) as cofactor.

It is found in the cytoplasm. The protein localises to the cytoskeleton. It carries out the reaction GTP + H2O = GDP + phosphate + H(+). Functionally, tubulin is the major constituent of microtubules, a cylinder consisting of laterally associated linear protofilaments composed of alpha- and beta-tubulin heterodimers. Microtubules grow by the addition of GTP-tubulin dimers to the microtubule end, where a stabilizing cap forms. Below the cap, tubulin dimers are in GDP-bound state, owing to GTPase activity of alpha-tubulin. This is Tubulin alpha chain (TUB1) from Encephalitozoon hellem (Microsporidian parasite).